Consider the following 176-residue polypeptide: UPF0262 protein GbCGDNIH1_1393 (176 aa).

Belongs to the UPF0262 family.

This is UPF0262 protein GbCGDNIH1_1393 from Granulibacter bethesdensis (strain ATCC BAA-1260 / CGDNIH1).